A 473-amino-acid chain; its full sequence is 3-isopropylmalate dehydratase large subunit (473 aa).

[4Fe-4S] cluster is bound by residues Cys354, Cys414, and Cys417. A disordered region spans residues Leu425 to Arg448.

It belongs to the aconitase/IPM isomerase family. LeuC type 1 subfamily. As to quaternary structure, heterodimer of LeuC and LeuD. [4Fe-4S] cluster serves as cofactor.

It carries out the reaction (2R,3S)-3-isopropylmalate = (2S)-2-isopropylmalate. Its pathway is amino-acid biosynthesis; L-leucine biosynthesis; L-leucine from 3-methyl-2-oxobutanoate: step 2/4. Catalyzes the isomerization between 2-isopropylmalate and 3-isopropylmalate, via the formation of 2-isopropylmaleate. This is 3-isopropylmalate dehydratase large subunit from Acidothermus cellulolyticus (strain ATCC 43068 / DSM 8971 / 11B).